The chain runs to 197 residues: TM2 domain-containing protein 1 (197 aa).

The first 32 residues, 1-32, serve as a signal peptide directing secretion; it reads MAFRWRSLMRFRSTTRLLLLFTFCLTVIHSLG. The Extracellular segment spans residues 33-105; the sequence is NDVDSCDKLH…GFNKTIPCRN (73 aa). Asn77, Asn84, Asn98, and Asn105 each carry an N-linked (GlcNAc...) asparagine glycan. The chain crosses the membrane as a helical span at residues 106–126; it reads VSGYSYKVAVALSLFLGWIGA. The region spanning 108 to 155 is the TM2 domain; sequence GYSYKVAVALSLFLGWIGADRFYLGYPALGLLKFCTVGFCGIGSLVDF. The Cytoplasmic portion of the chain corresponds to 127 to 143; sequence DRFYLGYPALGLLKFCT. A helical membrane pass occupies residues 144–164; it reads VGFCGIGSLVDFMLISMQIVG. At 165–197 the chain is on the extracellular side; it reads PSDGSDYIVDYYGARLTRLSITNETYRRMQPSP. A glycan (N-linked (GlcNAc...) asparagine) is linked at Asn187.

This sequence belongs to the TM2 family.

Its subcellular location is the membrane. The chain is TM2 domain-containing protein 1 (tm2d1) from Danio rerio (Zebrafish).